A 1220-amino-acid chain; its full sequence is DNA-directed RNA polymerase subunit beta' (1220 aa).

4 residues coordinate Zn(2+): C60, C62, C75, and C78. Positions 449, 451, and 453 each coordinate Mg(2+). The Zn(2+) site is built by C818, C892, C899, and C902.

The protein belongs to the RNA polymerase beta' chain family. As to quaternary structure, the RNAP catalytic core consists of 2 alpha, 1 beta, 1 beta' and 1 omega subunit. When a sigma factor is associated with the core the holoenzyme is formed, which can initiate transcription. Mg(2+) is required as a cofactor. Requires Zn(2+) as cofactor.

The catalysed reaction is RNA(n) + a ribonucleoside 5'-triphosphate = RNA(n+1) + diphosphate. Its function is as follows. DNA-dependent RNA polymerase catalyzes the transcription of DNA into RNA using the four ribonucleoside triphosphates as substrates. The polypeptide is DNA-directed RNA polymerase subunit beta' (Lacticaseibacillus casei (strain BL23) (Lactobacillus casei)).